Here is a 327-residue protein sequence, read N- to C-terminus: Complex I intermediate-associated protein 30, mitochondrial (327 aa).

The N-terminal 24 residues, 1–24 (MALVHKLLRGTYILRKFSKPASAL), are a transit peptide targeting the mitochondrion. Residues 42–63 (PVASPGKASSQRKTEGDLQGDH) are disordered. Positions 53–63 (RKTEGDLQGDH) are enriched in basic and acidic residues. Serine 318 carries the phosphoserine modification.

The protein belongs to the CIA30 family. Part of the mitochondrial complex I assembly/MCIA complex that comprises at least the core subunits TMEM126B, NDUFAF1, ECSIT and ACAD9 and complement subunits such as COA1 and TMEM186. Interacts with ECSIT. Interacts with ACAD9. At early stages of complex I assembly, it is found in intermediate subcomplexes that contain different subunits including NDUFB6, NDUFA6, NDUFA9, NDUFS3, NDUFS7, ND1, ND2 and ND3. Interacts with TMEM70 and TMEM242.

It is found in the mitochondrion. It localises to the mitochondrion matrix. In terms of biological role, as part of the MCIA complex, involved in the assembly of the mitochondrial complex I. The chain is Complex I intermediate-associated protein 30, mitochondrial from Pongo pygmaeus (Bornean orangutan).